A 339-amino-acid polypeptide reads, in one-letter code: 3-isopropylmalate dehydrogenase (339 aa).

Residues R87, R97, R124, and D214 each coordinate substrate. The Mg(2+) site is built by D214, D238, and D242. Position 274 to 286 (274 to 286 (GSAPDIAGQGIAD)) interacts with NAD(+).

This sequence belongs to the isocitrate and isopropylmalate dehydrogenases family. LeuB type 2 subfamily. In terms of assembly, homodimer. Mg(2+) is required as a cofactor. Mn(2+) serves as cofactor.

It localises to the cytoplasm. It catalyses the reaction (2R,3S)-3-isopropylmalate + NAD(+) = 4-methyl-2-oxopentanoate + CO2 + NADH. It functions in the pathway amino-acid biosynthesis; L-leucine biosynthesis; L-leucine from 3-methyl-2-oxobutanoate: step 3/4. In terms of biological role, catalyzes the oxidation of 3-carboxy-2-hydroxy-4-methylpentanoate (3-isopropylmalate) to 3-carboxy-4-methyl-2-oxopentanoate. The product decarboxylates to 4-methyl-2 oxopentanoate. This Mycobacterium marinum (strain ATCC BAA-535 / M) protein is 3-isopropylmalate dehydrogenase.